Here is a 450-residue protein sequence, read N- to C-terminus: 3-phosphoshikimate 1-carboxyvinyltransferase (450 aa).

The 3-phosphoshikimate site is built by K28, S29, and R33. K28 is a phosphoenolpyruvate binding site. Phosphoenolpyruvate-binding residues include G100 and R128. 3-phosphoshikimate-binding residues include S173, Q175, D326, and K353. Position 175 (Q175) interacts with phosphoenolpyruvate. D326 (proton acceptor) is an active-site residue. R357 and R402 together coordinate phosphoenolpyruvate.

It belongs to the EPSP synthase family. As to quaternary structure, monomer.

Its subcellular location is the cytoplasm. It catalyses the reaction 3-phosphoshikimate + phosphoenolpyruvate = 5-O-(1-carboxyvinyl)-3-phosphoshikimate + phosphate. It participates in metabolic intermediate biosynthesis; chorismate biosynthesis; chorismate from D-erythrose 4-phosphate and phosphoenolpyruvate: step 6/7. Catalyzes the transfer of the enolpyruvyl moiety of phosphoenolpyruvate (PEP) to the 5-hydroxyl of shikimate-3-phosphate (S3P) to produce enolpyruvyl shikimate-3-phosphate and inorganic phosphate. This chain is 3-phosphoshikimate 1-carboxyvinyltransferase, found in Brucella abortus (strain S19).